The sequence spans 102 residues: MDISIISDKNNPLLQRREVKFTVSFDAATPSIKDVKMKLVAVLNADKKVLVVDTLDQIFGKLEAEGYAKIYNDEKAMETIETKSVLEKNKIEEEAEAEVAEE.

It belongs to the eukaryotic ribosomal protein eS24 family.

The polypeptide is Small ribosomal subunit protein eS24 (Methanococcus maripaludis (strain C5 / ATCC BAA-1333)).